A 652-amino-acid chain; its full sequence is DNA ligase (652 aa).

NAD(+) is bound by residues 30–34 (DEVYD), 79–80 (SL), and glutamate 108. Lysine 110 acts as the N6-AMP-lysine intermediate in catalysis. 4 residues coordinate NAD(+): arginine 131, glutamate 165, lysine 280, and lysine 304. Residues cysteine 398, cysteine 401, cysteine 414, and cysteine 419 each contribute to the Zn(2+) site. The region spanning 574–652 (AKENPFKGKS…DEMRSKIEQA (79 aa)) is the BRCT domain.

This sequence belongs to the NAD-dependent DNA ligase family. LigA subfamily. It depends on Mg(2+) as a cofactor. Mn(2+) is required as a cofactor.

The catalysed reaction is NAD(+) + (deoxyribonucleotide)n-3'-hydroxyl + 5'-phospho-(deoxyribonucleotide)m = (deoxyribonucleotide)n+m + AMP + beta-nicotinamide D-nucleotide.. Its function is as follows. DNA ligase that catalyzes the formation of phosphodiester linkages between 5'-phosphoryl and 3'-hydroxyl groups in double-stranded DNA using NAD as a coenzyme and as the energy source for the reaction. It is essential for DNA replication and repair of damaged DNA. This Sulfurimonas denitrificans (strain ATCC 33889 / DSM 1251) (Thiomicrospira denitrificans (strain ATCC 33889 / DSM 1251)) protein is DNA ligase.